The following is a 184-amino-acid chain: ATP synthase subunit b, chloroplastic (184 aa).

A helical membrane pass occupies residues 27–49; it reads LATNPINLSVVFGVLIFFGKGVL.

Belongs to the ATPase B chain family. In terms of assembly, F-type ATPases have 2 components, F(1) - the catalytic core - and F(0) - the membrane proton channel. F(1) has five subunits: alpha(3), beta(3), gamma(1), delta(1), epsilon(1). F(0) has four main subunits: a(1), b(1), b'(1) and c(10-14). The alpha and beta chains form an alternating ring which encloses part of the gamma chain. F(1) is attached to F(0) by a central stalk formed by the gamma and epsilon chains, while a peripheral stalk is formed by the delta, b and b' chains.

It localises to the plastid. The protein resides in the chloroplast thylakoid membrane. Functionally, f(1)F(0) ATP synthase produces ATP from ADP in the presence of a proton or sodium gradient. F-type ATPases consist of two structural domains, F(1) containing the extramembraneous catalytic core and F(0) containing the membrane proton channel, linked together by a central stalk and a peripheral stalk. During catalysis, ATP synthesis in the catalytic domain of F(1) is coupled via a rotary mechanism of the central stalk subunits to proton translocation. In terms of biological role, component of the F(0) channel, it forms part of the peripheral stalk, linking F(1) to F(0). This chain is ATP synthase subunit b, chloroplastic, found in Draba nemorosa (Woodland whitlowgrass).